Here is a 125-residue protein sequence, read N- to C-terminus: Small ribosomal subunit protein uS12 (125 aa).

A 3-methylthioaspartic acid modification is found at Asp-89.

This sequence belongs to the universal ribosomal protein uS12 family. As to quaternary structure, part of the 30S ribosomal subunit. Contacts proteins S8 and S17. May interact with IF1 in the 30S initiation complex.

In terms of biological role, with S4 and S5 plays an important role in translational accuracy. Interacts with and stabilizes bases of the 16S rRNA that are involved in tRNA selection in the A site and with the mRNA backbone. Located at the interface of the 30S and 50S subunits, it traverses the body of the 30S subunit contacting proteins on the other side and probably holding the rRNA structure together. The combined cluster of proteins S8, S12 and S17 appears to hold together the shoulder and platform of the 30S subunit. This Cupriavidus metallidurans (strain ATCC 43123 / DSM 2839 / NBRC 102507 / CH34) (Ralstonia metallidurans) protein is Small ribosomal subunit protein uS12.